A 259-amino-acid chain; its full sequence is Glycerol-3-phosphate acyltransferase (259 aa).

The next 7 membrane-spanning stretches (helical) occupy residues 11–31 (IILASVVGYFLGSISWSIIIV), 62–82 (LVVAFLDALKVIFTSIIAILL), 93–112 (TSYFIPCIFALIGHCFPIYY), 124–144 (LGLLFVVNILYLIIFLIVWFI), 152–172 (VSVASIFSAFFVLIIMWIPYL), 188–208 (FSVAWKNYILFSLLNSFHYWF), and 211–231 (IWASGMLEGNIIVLIGGLILG).

The protein belongs to the PlsY family. Probably interacts with PlsX.

It is found in the cell membrane. The enzyme catalyses an acyl phosphate + sn-glycerol 3-phosphate = a 1-acyl-sn-glycero-3-phosphate + phosphate. Its pathway is lipid metabolism; phospholipid metabolism. Its function is as follows. Catalyzes the transfer of an acyl group from acyl-phosphate (acyl-PO(4)) to glycerol-3-phosphate (G3P) to form lysophosphatidic acid (LPA). This enzyme utilizes acyl-phosphate as fatty acyl donor, but not acyl-CoA or acyl-ACP. The sequence is that of Glycerol-3-phosphate acyltransferase from Mycoplasma capricolum subsp. capricolum (strain California kid / ATCC 27343 / NCTC 10154).